The primary structure comprises 249 residues: MAADLLDVHGLLFKRQQYKEADLLAKLWTKELGIVTVIAKGGMRPKSQLAAAVLPFTEGTFSILTRYKGISQLRTYKKLSQHDELFTDLDKNAYLSYLFDLADHAFSEYQKLGGYYDLLLVAFNRIVAGQDPEIIAQIVQLQLLDAFGVAPQLGACVICGKEKGIFDYSIAAGGVVCSDHFRSVSRLHLSPKATALIRTLALLPISRLGEIQIGEDLKKESRRAIAQIYQATVDLHLPSLRFLNEVRGS.

It belongs to the RecO family.

Functionally, involved in DNA repair and RecF pathway recombination. This Lactobacillus delbrueckii subsp. bulgaricus (strain ATCC BAA-365 / Lb-18) protein is DNA repair protein RecO.